The following is a 429-amino-acid chain: Glutamate-1-semialdehyde 2,1-aminomutase (429 aa).

Lys265 is modified (N6-(pyridoxal phosphate)lysine).

Belongs to the class-III pyridoxal-phosphate-dependent aminotransferase family. HemL subfamily. In terms of assembly, homodimer. It depends on pyridoxal 5'-phosphate as a cofactor.

It is found in the cytoplasm. It carries out the reaction (S)-4-amino-5-oxopentanoate = 5-aminolevulinate. The protein operates within porphyrin-containing compound metabolism; protoporphyrin-IX biosynthesis; 5-aminolevulinate from L-glutamyl-tRNA(Glu): step 2/2. The sequence is that of Glutamate-1-semialdehyde 2,1-aminomutase from Shewanella pealeana (strain ATCC 700345 / ANG-SQ1).